Reading from the N-terminus, the 381-residue chain is Estradiol 17-beta-dehydrogenase 2 (381 aa).

The helical; Signal-anchor for type II membrane protein transmembrane segment at phenylalanine 4–leucine 24 threads the bilayer. Residue glutamine 83–alanine 112 participates in NAD(+) binding. A substrate-binding site is contributed by serine 220. Tyrosine 233 serves as the catalytic Proton acceptor.

It belongs to the short-chain dehydrogenases/reductases (SDR) family. In terms of assembly, homodimer.

Its subcellular location is the endoplasmic reticulum membrane. It carries out the reaction 17beta-estradiol + NAD(+) = estrone + NADH + H(+). It catalyses the reaction testosterone + NAD(+) = androst-4-ene-3,17-dione + NADH + H(+). The enzyme catalyses 17beta-hydroxy-5alpha-androstan-3-one + NAD(+) = 5alpha-androstan-3,17-dione + NADH + H(+). The catalysed reaction is (20S)-hydroxypregn-4-en-3-one + NAD(+) = progesterone + NADH + H(+). In terms of biological role, catalyzes the NAD-dependent oxidation of highly active 17beta-hydroxysteroids, such as estradiol (E2), testosterone (T), and dihydrotestosterone (DHT), to their less active forms and thus regulates the biological potency of these steroids. Oxidizes estradiol to estrone, testosterone to androstenedione, and dihydrotestosterone to 5alpha-androstan-3,17-dione. Also has 20-alpha-HSD activity. The protein is Estradiol 17-beta-dehydrogenase 2 (Hsd17b2) of Mus musculus (Mouse).